Here is a 479-residue protein sequence, read N- to C-terminus: Adenosylhomocysteinase (479 aa).

The substrate site is built by T56, D134, and E200. 201-203 (TTT) serves as a coordination point for NAD(+). Positions 230 and 234 each coordinate substrate. NAD(+) contacts are provided by residues N235, 264 to 269 (GYGDVG), E287, N322, 343 to 345 (IGH), and N391.

The protein belongs to the adenosylhomocysteinase family. Homotetramer. It depends on NAD(+) as a cofactor.

It carries out the reaction S-adenosyl-L-homocysteine + H2O = L-homocysteine + adenosine. Its pathway is amino-acid biosynthesis; L-homocysteine biosynthesis; L-homocysteine from S-adenosyl-L-homocysteine: step 1/1. Its function is as follows. Adenosylhomocysteine is a competitive inhibitor of S-adenosyl-L-methionine-dependent methyl transferase reactions; therefore adenosylhomocysteinase may play a key role in the control of methylations via regulation of the intracellular concentration of adenosylhomocysteine. The protein is Adenosylhomocysteinase of Plasmodium falciparum (isolate 3D7).